We begin with the raw amino-acid sequence, 472 residues long: Nucleoporin NUP49/NSP49 (472 aa).

One copy of the FG 1 repeat lies at 2–3 (FG). The GLFG 1 repeat unit spans residues 14-17 (GLFG). Residues 28–104 (NTGFSFGGTQ…TANTGGGLFG (77 aa)) are disordered. An FG 2 repeat occupies 33–34 (FG). The stretch at 48–51 (GLFG) is one GLFG 2 repeat. Residues 64–80 (SFGQQQQQSQTNAFGGS) show a composition bias toward low complexity. FG repeat units lie at residues 65–66 (FG) and 77–78 (FG). GLFG repeat units follow at residues 86-89 (GLFG) and 101-104 (GLFG). The stretch at 113-116 (SLFG) is one SLFG 1 repeat. 2 GLFG repeats span residues 125 to 128 (GLFG) and 148 to 151 (GLFG). An SLFG 2 repeat occupies 159–162 (SLFG). The GLFG 7; approximate repeat unit spans residues 175-178 (GMFG). The SLFG 3 repeat unit spans residues 185–188 (SLFG). A GLFG 8 repeat occupies 199 to 202 (GLFG). The SLFG 4 repeat unit spans residues 210–213 (SLFG). The tract at residues 211-242 (LFGSSNNNNNNNNSNNIMSASGGLFGNQQQQL) is disordered. Low complexity predominate over residues 214-226 (SSNNNNNNNNSNN). The stretch at 233 to 236 (GLFG) is one GLFG 9 repeat.

The protein belongs to the nucleoporin GLFG family. As to quaternary structure, component of the nuclear pore complex (NPC). NPC constitutes the exclusive means of nucleocytoplasmic transport. NPCs allow the passive diffusion of ions and small molecules and the active, nuclear transport receptor-mediated bidirectional transport of macromolecules such as proteins, RNAs, ribonucleoparticles (RNPs), and ribosomal subunits across the nuclear envelope. Due to its 8-fold rotational symmetry, all subunits are present with 8 copies or multiples thereof. NUP49 is part of the NUP57 subcomplex (NIC96, NSP1, NUP49, NUP57) interacting with NUP57. Interacts through its FG repeats with karyopherins.

Its subcellular location is the nucleus. The protein resides in the nuclear pore complex. The protein localises to the nucleus membrane. Functionally, functions as a component of the nuclear pore complex (NPC). NPC components, collectively referred to as nucleoporins (NUPs), can play the role of both NPC structural components and of docking or interaction partners for transiently associated nuclear transport factors. Active directional transport is assured by both, a Phe-Gly (FG) repeat affinity gradient for these transport factors across the NPC and a transport cofactor concentration gradient across the nuclear envelope (GSP1 and GSP2 GTPases associated predominantly with GTP in the nucleus, with GDP in the cytoplasm). NUP49 plays an important role in several nuclear transport pathways including poly(A)+ RNA, tRNA, and pre-ribosome transport. This is Nucleoporin NUP49/NSP49 (NUP49) from Saccharomyces cerevisiae (strain ATCC 204508 / S288c) (Baker's yeast).